We begin with the raw amino-acid sequence, 71 residues long: Dermaseptin-PT9 (71 aa).

Residues 1–22 (MAFLKKSLFLVLFLGLVSLSIC) form the signal peptide. The propeptide occupies 23-43 (EEEKRENEMEQEDDEQSEMKR). Valine amide is present on V68. Positions 69–71 (GEQ) are excised as a propeptide.

It belongs to the frog skin active peptide (FSAP) family. Dermaseptin subfamily. As to expression, expressed by the skin glands.

It localises to the secreted. It is found in the target cell membrane. In terms of biological role, antimicrobial peptide with activity against fungi, Gram-positive and Gram-negative bacteria. Is active against S.aureus (MIC=16 uM), MRSA (MIC=32 uM), E.faecalis (MIC=16 uM), E.coli (MIC=8 uM), P.aeruginosa (MIC=16 uM), K.pneumoniae (MIC=8 uM), and C.albicans (MIC=64 uM). Also inhibits biofilm formation. Acts by disrupting cell membranes. Also exhibits anti-proliferative effect against various human cancer cells. Shows weak hemolytic activity towards horse erythrocytes. This chain is Dermaseptin-PT9, found in Phyllomedusa tarsius (Brownbelly leaf frog).